The primary structure comprises 164 residues: Transcriptional repressor NrdR (164 aa).

A zinc finger spans residues 3 to 34; that stretch reads CPKCNYHKSSVVDSRQAEDGNTIRRRRECEQC. The ATP-cone domain occupies 49-139; sequence LLVIKKDGTR…VYKSFKDVDE (91 aa).

The protein belongs to the NrdR family. Zn(2+) serves as cofactor.

In terms of biological role, negatively regulates transcription of bacterial ribonucleotide reductase nrd genes and operons by binding to NrdR-boxes. In Streptococcus pyogenes serotype M5 (strain Manfredo), this protein is Transcriptional repressor NrdR.